The chain runs to 1483 residues: Protein ORF C (1483 aa).

Disordered stretches follow at residues 135–268 (LNDR…GRPP), 306–334 (VPYQ…LRPV), 383–506 (RRRA…FKRH), 518–653 (SIDD…DRNR), 680–911 (RQRR…TSVS), 949–976 (SSDD…RGGS), 1013–1061 (ALQQ…TDLI), and 1089–1299 (FSVA…QPSD). Residues 141-153 (AAGSAQRGSAGSR) are compositionally biased toward low complexity. The span at 157 to 170 (DNLTPTAADTTGAQ) shows a compositional bias: polar residues. Composition is skewed to low complexity over residues 190 to 206 (ASNV…RRQQ) and 220 to 251 (ARQQ…TTAT). Positions 252–264 (RQVFEQQGPSTIQ) are enriched in polar residues. 3 stretches are compositionally biased toward low complexity: residues 424-449 (SGQS…TTGT), 474-483 (SNEPSRQSQS), and 529-541 (TMTQ…STTR). Polar residues predominate over residues 596 to 607 (GSVTTTQPSGQL). A compositionally biased stretch (basic and acidic residues) spans 609 to 621 (SDDRGRPAPERRQ). The span at 622–640 (QPTSRQTVAQTNIIPNTSG) shows a compositional bias: polar residues. The span at 680–689 (RQRRETEAEH) shows a compositional bias: basic and acidic residues. The segment covering 699 to 710 (TGVTPQRSNNPF) has biased composition (polar residues). Residues 740–749 (SLREYRRRDP) show a composition bias toward basic and acidic residues. The span at 754–774 (GRSYTDGSTTSDGDSSDNSWS) shows a compositional bias: low complexity. The segment covering 841–876 (NLKSPSPRTKLTRSSSLKSPGTTTRDTQQTSHPLTR) has biased composition (polar residues). Low complexity predominate over residues 894–909 (DSGGSSDGNTGSSQTS). Polar residues-rich tracts occupy residues 1096–1109 (GSTS…SSIP) and 1116–1125 (GPSTMTSQSV). Residues 1148–1158 (SQSQPSSEQPA) are compositionally biased toward low complexity. A compositionally biased stretch (polar residues) spans 1188-1202 (QPQSTVTNTQTQDVL). Low complexity-rich tracts occupy residues 1204 to 1226 (SQGS…KTGS) and 1233 to 1251 (KSAL…SGKS). Residues 1258-1276 (AASSTDPTTKPTRKVSINA) are compositionally biased toward polar residues. Low complexity predominate over residues 1284–1299 (KSSTKQSTKTSTQPSD). Positions 1408–1438 (AEQIRNLEVDELKILRQQVRERIANERQQQD) form a coiled coil. A disordered region spans residues 1454-1483 (DMLVSEESAAPTPLPMDTGRFTPKSDVDMS).

This is Protein ORF C from Elephantid herpesvirus 1 (isolate Asian elephant/Berlin/Kiba/1998) (EIHV-1).